Reading from the N-terminus, the 626-residue chain is Hemocyanin AA6 chain (626 aa).

Cu cation contacts are provided by His-170, His-174, His-201, His-321, His-325, and His-361. Ser-374 carries the post-translational modification Phosphoserine.

The protein belongs to the tyrosinase family. Hemocyanin subfamily. In terms of assembly, scorpion hemocyanin is a 24-chain polymer with 8 different chains identified, assembled in hexameric substructures. Three disulfide bonds are present. In terms of tissue distribution, hemolymph.

It is found in the secreted. Its subcellular location is the extracellular space. Hemocyanins are copper-containing oxygen carriers occurring freely dissolved in the hemolymph of many mollusks and arthropods. The chain is Hemocyanin AA6 chain from Androctonus australis (Sahara scorpion).